Reading from the N-terminus, the 506-residue chain is MALTYILFQVAVALLAILTYYIHRKLTYFKRRGIPFVAPHLIRGNMEELQKTKNIHEIFQDHYNKFRESKAPFVGFFFFQSPAAFVIDLELAKQILIKDFSNFSNKGIFYNEKDDPISAHLFNLDGAQWRLLRNKLSSTFTSGKMKLMYPTVVSVANEFMTVMHEKVPKNSVLEIRDLVARFTVDVIGTCAFGIQCNSLRDEKAEFLYFGKRSLVDKRHGTLLNGFMRSYPKLARKLGMVRTAPHIQEFYSRIVTETVAVREKEHIKRNDFMDMLIELKNQKEMTLENGDVVRGLTMEEVLAQAFVFFIAGFETSSSTMGFALYELAKNPDIQDKVRAEVEEVIEQHDQNFTYECTKDLKYLNQVLDETLRLYTIVPNLDRMAAKRYVVPGHPNFVIEAGQSVIIPSSAIHHDPSIYPEPFEFRPERFSPEESAGRPSVAWLPFGDGPRNCIGLRFGQMQARIGLALLIRNFKFSTCSKTPNPLVYDPKSFVLGVKDGIYLKVETV.

Position 451 (C451) interacts with heme.

The protein belongs to the cytochrome P450 family. The cofactor is heme.

It localises to the endoplasmic reticulum membrane. The protein localises to the microsome membrane. Its function is as follows. Involved in the metabolism of insect hormones and in the breakdown of synthetic insecticides. The polypeptide is Cytochrome P450 6a8 (Cyp6a8) (Drosophila melanogaster (Fruit fly)).